The following is a 104-amino-acid chain: Toxin-like protein 14 (104 aa).

Positions 1-25 are cleaved as a signal peptide; it reads MNTYNARLYIFSLALALVILKGTKC.

Contains 4 disulfide bonds. In terms of tissue distribution, expressed by the venom gland.

The protein localises to the secreted. This chain is Toxin-like protein 14, found in Urodacus yaschenkoi (Inland robust scorpion).